Consider the following 378-residue polypeptide: MSSFDLPAPSPPRCSPQFPSIGQEPPEMNLYYENFFHPQGVPSPQRPSFEGGGEYGATPNPYLWFNGPTMTPPPYLPGPNASPFLPQAYGVQRPLLPSVSGLGGSDLGWLPIPSQEELMKLVRPPYSYSALIAMAIHGAPDKRLTLSQIYQYVADNFPFYNKSKAGWQNSIRHNLSLNDCFKKVPRDEDDPGKGNYWTLDPNCEKMFDNGNFRRKRKRKSDVSSSTASLALEKTESSLPVDSPKTTEPQDILDGASPGGTTSSPEKRPSPPPSGAPCLNSFLSSMTAYVSGGSPTSHPLVTPGLSPEPSDKTGQNSLTFNSFSPLTNLSNHSGGGDWANPMPTNMLSYGGSVLSQFSPHFYNSVNTSGVLYPREGTEV.

Disordered stretches follow at residues 1–26 (MSSF…QEPP) and 208–278 (DNGN…APCL). A DNA-binding region (fork-head) is located at residues 123 to 217 (RPPYSYSALI…DNGNFRRKRK (95 aa)). Residues 236 to 248 (SSLPVDSPKTTEP) show a composition bias toward polar residues.

In terms of tissue distribution, expressed in kidney.

It localises to the nucleus. Its function is as follows. Transcriptional activator required for the development of normal hearing, sense of balance and kidney function. Required for the expression of SLC26A4/PDS, JAG1 and COCH in a subset of epithelial cells and the development of the endolymphatic system in the inner ear. Also required for the expression of SLC4A1/AE1, SLC4A9/AE4, ATP6V1B1 and the differentiation of intercalated cells in the epithelium of distal renal tubules. In Homo sapiens (Human), this protein is Forkhead box protein I1 (FOXI1).